A 125-amino-acid polypeptide reads, in one-letter code: Large ribosomal subunit protein bL12 (125 aa).

This sequence belongs to the bacterial ribosomal protein bL12 family. As to quaternary structure, homodimer. Part of the ribosomal stalk of the 50S ribosomal subunit. Forms a multimeric L10(L12)X complex, where L10 forms an elongated spine to which 2 to 4 L12 dimers bind in a sequential fashion. Binds GTP-bound translation factors.

Functionally, forms part of the ribosomal stalk which helps the ribosome interact with GTP-bound translation factors. Is thus essential for accurate translation. This chain is Large ribosomal subunit protein bL12, found in Rhizobium johnstonii (strain DSM 114642 / LMG 32736 / 3841) (Rhizobium leguminosarum bv. viciae).